The following is a 184-amino-acid chain: MAEPQPASSGLTDEAALSCCSDPDPSTKDFLLQQTMLRIKDPKKSLDFYTRVLGLTLLQKLDFPSMKFSLYFLAYEDKNDIPKDKTERTAWAFSRKATLELTHNWGTEDDETQSYHNGNSDPRGFGHIGIAVPDVYEACKRFEELGVKFVKKPDDGKMKGLAFVQDPDGYWIEILNPNKMATII.

At alanine 2 the chain carries N-acetylalanine. An intrachain disulfide couples cysteine 19 to cysteine 20. Residues leucine 31–proline 177 enclose the VOC domain. Positions 34 and 38 each coordinate substrate. Glutamine 34 serves as a coordination point for Zn(2+). Glutamate 100 is a Zn(2+) binding site. Position 104 (asparagine 104) interacts with substrate. Threonine 107 is modified (phosphothreonine). The substrate site is built by arginine 123 and histidine 127. Histidine 127 is a binding site for Zn(2+). An S-glutathionyl cysteine modification is found at cysteine 139. Residue lysine 148 is modified to N6-acetyllysine; alternate. An N6-succinyllysine; alternate modification is found at lysine 148. Substrate is bound at residue lysine 157–methionine 158. Zn(2+) is bound at residue glutamate 173. Glutamate 173 serves as the catalytic Proton donor/acceptor.

It belongs to the glyoxalase I family. In terms of assembly, homodimer. The cofactor is Zn(2+). In terms of processing, glutathionylation at Cys-139 inhibits enzyme activity. Phosphorylated at Thr-107 in the presence of CaMK2. However, this is a consensus site for phosphorylation by CK2 so phosphorylation may be mediated by CK2 rather than CaMK2. Phosphorylation is induced by TNF and suppresses the TNF-induced transcriptional activity of NF-kappa-B. Post-translationally, exists in a nitric oxide (NO)-modified form. The exact nature of the modification is unknown, but it suppresses the TNF-induced transcriptional activity of NF-kappa-B.

It carries out the reaction (R)-S-lactoylglutathione = methylglyoxal + glutathione. It participates in secondary metabolite metabolism; methylglyoxal degradation; (R)-lactate from methylglyoxal: step 1/2. Its function is as follows. Catalyzes the conversion of hemimercaptal, formed from methylglyoxal and glutathione, to S-lactoylglutathione. Involved in the regulation of TNF-induced transcriptional activity of NF-kappa-B. Required for normal osteoclastogenesis. This is Lactoylglutathione lyase (Glo1) from Rattus norvegicus (Rat).